The primary structure comprises 141 residues: Large ribosomal subunit protein uL11 (141 aa).

This sequence belongs to the universal ribosomal protein uL11 family. Part of the ribosomal stalk of the 50S ribosomal subunit. Interacts with L10 and the large rRNA to form the base of the stalk. L10 forms an elongated spine to which L12 dimers bind in a sequential fashion forming a multimeric L10(L12)X complex. One or more lysine residues are methylated.

Forms part of the ribosomal stalk which helps the ribosome interact with GTP-bound translation factors. In Helicobacter hepaticus (strain ATCC 51449 / 3B1), this protein is Large ribosomal subunit protein uL11.